Here is an 815-residue protein sequence, read N- to C-terminus: Subtilisin-like protease SBT2.5 (815 aa).

The signal sequence occupies residues 1-19 (MDIGLRIFVVFVLLVAVTA). One can recognise an Inhibitor I9 domain in the interval 21 to 124 (VYIVTMEGDP…RSVDKDWKVR (104 aa)). The Peptidase S8 domain maps to 120–671 (DWKVRRLTTH…SGHVNPSAAL (552 aa)). Residues D160 and H234 each act as charge relay system in the active site. Positions 397-501 (TLVSANDVLL…VSKSMDLIDY (105 aa)) constitute a PA domain. 2 N-linked (GlcNAc...) asparagine glycosylation sites follow: N503 and N577. The Charge relay system role is filled by S596. A glycan (N-linked (GlcNAc...) asparagine) is linked at N701.

This sequence belongs to the peptidase S8 family. As to expression, expressed in roots, leaves and flowers of mature plants.

This chain is Subtilisin-like protease SBT2.5, found in Arabidopsis thaliana (Mouse-ear cress).